Consider the following 341-residue polypeptide: Heat-inducible transcription repressor HrcA (341 aa).

It belongs to the HrcA family.

Its function is as follows. Negative regulator of class I heat shock genes (grpE-dnaK-dnaJ and groELS operons). Prevents heat-shock induction of these operons. The protein is Heat-inducible transcription repressor HrcA of Corynebacterium jeikeium (strain K411).